The following is a 319-amino-acid chain: Acyl-coenzyme A thioesterase 8 (319 aa).

Positions 1–20 (MSSPQAPEDGQGCGDRGDPP) are disordered. Active-site charge relay system residues include Asp-232, Ser-254, and Gln-304. The Microbody targeting signal signature appears at 317-319 (SKL).

This sequence belongs to the C/M/P thioester hydrolase family. As to quaternary structure, homodimer. (Microbial infection) Interacts with human immunodeficiency virus (HIV-1) Nef (via middle region); this interaction enhances ACOT8 Acyl-CoA thioesterase activity and occurs in a Nef myristoylation-independent manner. According to a second report, the interaction with HIV-1 Nef occurs in a Nef myristoylation-independent manner but does not enhance ACOT8 Acyl-CoA thioesterase activity. In terms of tissue distribution, detected in a T-cell line (at protein level). Ubiquitous.

It is found in the peroxisome matrix. It carries out the reaction choloyl-CoA + H2O = cholate + CoA + H(+). It catalyses the reaction chenodeoxycholoyl-CoA + H2O = chenodeoxycholate + CoA + H(+). The enzyme catalyses acetyl-CoA + H2O = acetate + CoA + H(+). The catalysed reaction is butanoyl-CoA + H2O = butanoate + CoA + H(+). It carries out the reaction 2-methylpropanoyl-CoA + H2O = 2-methylpropanoate + CoA + H(+). It catalyses the reaction hexanoyl-CoA + H2O = hexanoate + CoA + H(+). The enzyme catalyses octanoyl-CoA + H2O = octanoate + CoA + H(+). The catalysed reaction is decanoyl-CoA + H2O = decanoate + CoA + H(+). It carries out the reaction dodecanoyl-CoA + H2O = dodecanoate + CoA + H(+). It catalyses the reaction tetradecanoyl-CoA + H2O = tetradecanoate + CoA + H(+). The enzyme catalyses hexadecanoyl-CoA + H2O = hexadecanoate + CoA + H(+). The catalysed reaction is octadecanoyl-CoA + H2O = octadecanoate + CoA + H(+). It carries out the reaction malonyl-CoA + H2O = malonate + CoA + H(+). It catalyses the reaction acetoacetyl-CoA + H2O = acetoacetate + CoA + H(+). The enzyme catalyses propanoyl-CoA + H2O = propanoate + CoA + H(+). The catalysed reaction is succinyl-CoA + H2O = succinate + CoA + H(+). It carries out the reaction glutaryl-CoA + H2O = glutarate + CoA + H(+). It catalyses the reaction hexanedioyl-CoA + H2O = hexanedioate + CoA + H(+). The enzyme catalyses octanedioyl-CoA + H2O = octanedioate + CoA + H(+). The catalysed reaction is decanedioyl-CoA + H2O = decanedioate + CoA + H(+). It carries out the reaction dodecanedioyl-CoA + H2O = dodecanedioate + CoA + H(+). It catalyses the reaction (9Z)-tetradecenoyl-CoA + H2O = (9Z)-tetradecenoate + CoA + H(+). The enzyme catalyses (9Z)-hexadecenoyl-CoA + H2O = (9Z)-hexadecenoate + CoA + H(+). The catalysed reaction is (9Z)-octadecenoyl-CoA + H2O = (9Z)-octadecenoate + CoA + H(+). It carries out the reaction (9Z,12Z)-octadecadienoyl-CoA + H2O = (9Z,12Z)-octadecadienoate + CoA + H(+). It catalyses the reaction eicosanoyl-CoA + H2O = eicosanoate + CoA + H(+). The enzyme catalyses (5Z,8Z,11Z,14Z)-eicosatetraenoyl-CoA + H2O = (5Z,8Z,11Z,14Z)-eicosatetraenoate + CoA + H(+). The catalysed reaction is 4,8-dimethylnonanoyl-CoA + H2O = 4,8-dimethylnonanoate + CoA + H(+). It carries out the reaction 2,6-dimethylheptanoyl-CoA + H2O = 2,6-dimethylheptanoate + CoA + H(+). It catalyses the reaction (3S)-3-hydroxy-3-methylglutaryl-CoA + H2O = 3-hydroxy-3-methylglutarate + CoA + H(+). The enzyme catalyses 3alpha,7alpha,12alpha-trihydroxy-5beta-cholestan-26-oyl-CoA + H2O = 3alpha,7alpha,12alpha-trihydroxy-5beta-cholestan-26-oate + CoA + H(+). The catalysed reaction is 2-methyloctadecanoyl-CoA + H2O = 2-methyloctadecanoate + CoA + H(+). It carries out the reaction prostaglandin F2alpha-CoA + H2O = prostaglandin F2alpha + CoA + H(+). Its pathway is lipid metabolism; fatty acid metabolism. Inhibited by CoASH (IC(50)=10-15 uM). Also inhibited by cysteine-reactive agents. In terms of biological role, catalyzes the hydrolysis of acyl-CoAs into free fatty acids and coenzyme A (CoASH), regulating their respective intracellular levels. Displays no strong substrate specificity with respect to the carboxylic acid moiety of Acyl-CoAs. Hydrolyzes medium length (C2 to C20) straight-chain, saturated and unsaturated acyl-CoAS but is inactive towards substrates with longer aliphatic chains. Moreover, it catalyzes the hydrolysis of CoA esters of bile acids, such as choloyl-CoA and chenodeoxycholoyl-CoA and competes with bile acid CoA:amino acid N-acyltransferase (BAAT). Is also able to hydrolyze CoA esters of dicarboxylic acids. It is involved in the metabolic regulation of peroxisome proliferation. Its function is as follows. (Microbial infection) May mediate Nef-induced down-regulation of CD4 cell-surface expression. The chain is Acyl-coenzyme A thioesterase 8 (ACOT8) from Homo sapiens (Human).